The chain runs to 508 residues: Glutamyl-tRNA(Gln) amidotransferase subunit B, mitochondrial (508 aa).

It belongs to the GatB/GatE family. GatB subfamily. Subunit of the heterotrimeric GatFAB amidotransferase (AdT) complex, composed of A, B and F subunits.

Its subcellular location is the mitochondrion. It carries out the reaction L-glutamyl-tRNA(Gln) + L-glutamine + ATP + H2O = L-glutaminyl-tRNA(Gln) + L-glutamate + ADP + phosphate + H(+). Its function is as follows. Allows the formation of correctly charged Gln-tRNA(Gln) through the transamidation of misacylated Glu-tRNA(Gln) in the mitochondria. The reaction takes place in the presence of glutamine and ATP through an activated gamma-phospho-Glu-tRNA(Gln). In Scheffersomyces stipitis (strain ATCC 58785 / CBS 6054 / NBRC 10063 / NRRL Y-11545) (Yeast), this protein is Glutamyl-tRNA(Gln) amidotransferase subunit B, mitochondrial.